A 201-amino-acid chain; its full sequence is Large ribosomal subunit protein uL4 (201 aa).

Residues 46 to 71 (QKTRAEITGSGKKPWRQKGTGRARSG) are disordered.

It belongs to the universal ribosomal protein uL4 family. As to quaternary structure, part of the 50S ribosomal subunit.

One of the primary rRNA binding proteins, this protein initially binds near the 5'-end of the 23S rRNA. It is important during the early stages of 50S assembly. It makes multiple contacts with different domains of the 23S rRNA in the assembled 50S subunit and ribosome. Functionally, forms part of the polypeptide exit tunnel. The sequence is that of Large ribosomal subunit protein uL4 from Klebsiella pneumoniae (strain 342).